The sequence spans 82 residues: MNRLMILVFAAVFLALASADEDVDIAKRGIPCLCVSDGPSTRGNNLSGIMWMKTGGYGGNGCPKGWHFCGKSRGFFSDCCKR.

An N-terminal signal peptide occupies residues 1 to 19 (MNRLMILVFAAVFLALASA). Residues 20-26 (DEDVDIA) constitute a propeptide that is removed on maturation. Disulfide bonds link cysteine 32–cysteine 79, cysteine 34–cysteine 69, and cysteine 62–cysteine 80.

The protein belongs to the sea anemone sodium channel inhibitory toxin family. Type I subfamily.

It localises to the secreted. The protein resides in the nematocyst. Its function is as follows. Binds specifically to voltage-gated sodium channels (Nav), thereby delaying their inactivation during signal transduction. Causes death to crabs. The chain is Delta-actitoxin-Aeq2c from Actinia equina (Beadlet anemone).